Here is a 292-residue protein sequence, read N- to C-terminus: MAQPPPDVEGDDCLPAYRHLFCPDLLRDKVAFITGGGSGIGFRIAEIFMRHGCHTVIASRSLPRVLTAARKLAGATGRRCLPLSMDVRAPPAIVAAVDQALKEFGRIDILINCAAGNFLCPAGALSFNAFKTVMDIDTSGTFNVSRVLYEKFFRDHGGVIVNITATLGNRGQALQVHAGSAKAAVDAMTRHLAVEWGPQNIRVNSLAPGPISGTEGLRRLGGPQASLSTKVTASPLQRLGNKTEIAHSVLYLASPLASYVTGAVLVADGGAWLTFPNDVKGLADFASFSAKL.

Ala2 is modified (N-acetylalanine). NADP(+) contacts are provided by residues 35–40 (GGGSGI), 60–64 (RSLPR), and Asp86. A substrate-binding site is contributed by Arg60. Substrate-binding positions include Arg88, Phe118, and 126 to 128 (SFN). Lys151 carries the post-translational modification N6-acetyllysine. NADP(+) is bound by residues Lys182 and 208–214 (PGPISGT). Position 219 (Arg219) interacts with substrate. Ser287 is subject to Phosphoserine. A Microbody targeting signal motif is present at residues 290 to 292 (AKL). Lys291 is modified (N6-acetyllysine).

This sequence belongs to the short-chain dehydrogenases/reductases (SDR) family. 2,4-dienoyl-CoA reductase subfamily. In terms of assembly, monomer, dimer and oligomer.

The protein localises to the peroxisome. It catalyses the reaction a (2E,4Z)-dienoyl-CoA + NADPH + H(+) = a 4,5-saturated-(3E)-enoyl-CoA + NADP(+). It carries out the reaction a (2E,4E)-dienoyl-CoA + NADPH + H(+) = a 4,5-saturated-(3E)-enoyl-CoA + NADP(+). The catalysed reaction is (2E,4E)-hexadienoyl-CoA + NADPH + H(+) = (3E)-hexenoyl-CoA + NADP(+). The enzyme catalyses (2E,4E)-decadienoyl-CoA + NADPH + H(+) = (3E)-decenoyl-CoA + NADP(+). It catalyses the reaction (2E,4Z,7Z,10Z,13Z,16Z,19Z)-docosaheptaenoyl-CoA + NADPH + H(+) = (3E,7Z,10Z,13Z,16Z,19Z)-docosahexaenoyl-CoA + NADP(+). In terms of biological role, auxiliary enzyme of beta-oxidation. Participates in the degradation of unsaturated fatty enoyl-CoA esters having double bonds in both even- and odd-numbered positions in peroxisome. Catalyzes the NADP-dependent reduction of 2,4-dienoyl-CoA to yield trans-3-enoyl-CoA. Has activity towards short and medium chain 2,4-dienoyl-CoAs, but also towards 2,4,7,10,13,16,19-docosaheptaenoyl-CoA, suggesting that it does not constitute a rate limiting step in the peroxisomal degradation of docosahexaenoic acid. The sequence is that of Peroxisomal 2,4-dienoyl-CoA reductase [(3E)-enoyl-CoA-producing] (DECR2) from Pongo abelii (Sumatran orangutan).